A 255-amino-acid chain; its full sequence is Cell division protein DivIB (255 aa).

The Cytoplasmic portion of the chain corresponds to 1–30 (MKNSKVIKLQDRVPKLKNQKKRNKPPVNHR). A helical membrane pass occupies residues 31–51 (LILYISILFLLVLFLIYFRSP). Over 52–255 (LSNIKKISVF…FKYLDDEKKK (204 aa)) the chain is Extracellular. A POTRA domain is found at 53–121 (SNIKKISVFG…NKIDIHIEEY (69 aa)).

Belongs to the FtsQ/DivIB family. DivIB subfamily.

The protein resides in the cell membrane. Functionally, cell division protein that may be involved in stabilizing or promoting the assembly of the division complex. This Bacillus cytotoxicus (strain DSM 22905 / CIP 110041 / 391-98 / NVH 391-98) protein is Cell division protein DivIB.